Consider the following 98-residue polypeptide: Co-chaperonin GroES (98 aa).

Belongs to the GroES chaperonin family. Heptamer of 7 subunits arranged in a ring. Interacts with the chaperonin GroEL.

The protein resides in the cytoplasm. Its function is as follows. Together with the chaperonin GroEL, plays an essential role in assisting protein folding. The GroEL-GroES system forms a nano-cage that allows encapsulation of the non-native substrate proteins and provides a physical environment optimized to promote and accelerate protein folding. GroES binds to the apical surface of the GroEL ring, thereby capping the opening of the GroEL channel. In Micrococcus luteus (strain ATCC 4698 / DSM 20030 / JCM 1464 / CCM 169 / CCUG 5858 / IAM 1056 / NBRC 3333 / NCIMB 9278 / NCTC 2665 / VKM Ac-2230) (Micrococcus lysodeikticus), this protein is Co-chaperonin GroES.